The chain runs to 129 residues: Large ribosomal subunit protein mL53 (129 aa).

The transit peptide at 1–50 directs the protein to the mitochondrion; the sequence is MREKLNLLAKLKSVVYKFDPLNPNTRSIRSFIPLTTCKRSRQLAPECSIS.

This sequence belongs to the mitochondrion-specific ribosomal protein mL53 family.

It localises to the mitochondrion. This is Large ribosomal subunit protein mL53 (mrpl53) from Dictyostelium discoideum (Social amoeba).